The primary structure comprises 493 residues: Glycylpeptide N-tetradecanoyltransferase (493 aa).

Tetradecanoyl-CoA is bound at residue 45 to 48 (HKFW). Residues 53–73 (VPQITGSGAPAPIEEGPIDDP) form a disordered region. Tetradecanoyl-CoA is bound by residues 182–184 (LCV) and 190–194 (SKRLA). L493 acts as the Proton acceptor; via carboxylate in catalysis.

This sequence belongs to the NMT family. In terms of assembly, monomer.

The protein resides in the cytoplasm. The enzyme catalyses N-terminal glycyl-[protein] + tetradecanoyl-CoA = N-tetradecanoylglycyl-[protein] + CoA + H(+). Functionally, adds a myristoyl group to the N-terminal glycine residue of certain cellular proteins. This chain is Glycylpeptide N-tetradecanoyltransferase, found in Cryptococcus neoformans var. neoformans serotype D (strain B-3501A) (Filobasidiella neoformans).